A 229-amino-acid chain; its full sequence is Prolactin (229 aa).

The signal sequence occupies residues 1–30; sequence MDNKGWSLKGSLLFLLLLLSDLLLCKSVAS. A disulfide bridge connects residues C34 and C41. S56 carries the phosphoserine modification. N61 is a glycosylation site (N-linked (GlcNAc...) asparagine). S64 and S120 each carry phosphoserine. Cystine bridges form between C88/C204 and C221/C229.

Belongs to the somatotropin/prolactin family. In terms of assembly, interacts with PRLR.

The protein localises to the secreted. In terms of biological role, prolactin acts primarily on the mammary gland by promoting lactation. The chain is Prolactin (PRL) from Felis catus (Cat).